Reading from the N-terminus, the 180-residue chain is Large ribosomal subunit protein uL6 (180 aa).

It belongs to the universal ribosomal protein uL6 family. As to quaternary structure, part of the 50S ribosomal subunit.

In terms of biological role, this protein binds to the 23S rRNA, and is important in its secondary structure. It is located near the subunit interface in the base of the L7/L12 stalk, and near the tRNA binding site of the peptidyltransferase center. This is Large ribosomal subunit protein uL6 from Dictyoglomus thermophilum (strain ATCC 35947 / DSM 3960 / H-6-12).